A 446-amino-acid polypeptide reads, in one-letter code: Sensor protein PfeS (446 aa).

At Met1–Lys9 the chain is on the cytoplasmic side. A helical membrane pass occupies residues Leu10–Leu30. Over Ser31–Thr155 the chain is Periplasmic. Residues His156–Tyr176 traverse the membrane as a helical segment. Residues Arg177–Ala233 enclose the HAMP domain. Residues Arg177–Ala446 are Cytoplasmic-facing. Residues Thr241–Ala446 enclose the Histidine kinase domain. Phosphohistidine; by autocatalysis is present on His244.

It localises to the cell inner membrane. The enzyme catalyses ATP + protein L-histidine = ADP + protein N-phospho-L-histidine.. In terms of biological role, member of the two-component regulatory system PfeR/PfeS. May activate PfeR by phosphorylation. In Pseudomonas aeruginosa (strain ATCC 15692 / DSM 22644 / CIP 104116 / JCM 14847 / LMG 12228 / 1C / PRS 101 / PAO1), this protein is Sensor protein PfeS (pfeS).